Reading from the N-terminus, the 166-residue chain is NADH-ubiquinone oxidoreductase chain 6 (166 aa).

6 helical membrane-spanning segments follow: residues 4-24 (FFSL…VVSA), 27-47 (QGVV…VFLG), 50-70 (FAAL…FGYC), 82-102 (VGGT…LLCL), 109-129 (LLVY…VGVF), and 135-155 (WGLI…LVIL).

Belongs to the complex I subunit 6 family.

It localises to the mitochondrion membrane. The catalysed reaction is a ubiquinone + NADH + 5 H(+)(in) = a ubiquinol + NAD(+) + 4 H(+)(out). Core subunit of the mitochondrial membrane respiratory chain NADH dehydrogenase (Complex I) that is believed to belong to the minimal assembly required for catalysis. Complex I functions in the transfer of electrons from NADH to the respiratory chain. The immediate electron acceptor for the enzyme is believed to be ubiquinone. This Lycodon semicarinatus (Ryukyu odd-tooth snake) protein is NADH-ubiquinone oxidoreductase chain 6 (MT-ND6).